The following is a 268-amino-acid chain: (+)-cis,trans-nepetalactol synthase NEPS2 (268 aa).

NAD(+)-binding positions include 16 to 22 (GGASGIG), 41 to 43 (DIQ), 65 to 66 (DI), asparagine 92, 163 to 167 (YVMSK), and 196 to 200 (VLTPL).

The protein belongs to the short-chain dehydrogenases/reductases (SDR) family.

It catalyses the reaction (S)-8-oxocitronellyl enol = cis-trans-nepetalactol. Functionally, functions as a non-oxidoreductive cyclase to promote the formation of cis-trans-nepetalactol. Cis-trans-nepetalactol is then oxidized by NEPS1 into cis-trans-nepetalactone, which belongs to a family of metabolites that are both insect-repellent and have euphoric effect in cats. Binds NAD(+) as classical short-chain dehydrogenase/reductase (SDR), but does not utilize it for its redox-neutral cyclase activity. The polypeptide is (+)-cis,trans-nepetalactol synthase NEPS2 (Nepeta racemosa (Catmint)).